Here is a 401-residue protein sequence, read N- to C-terminus: Large ribosomal subunit protein uL3 (401 aa).

Residues 1-22 (MSHRKFSAPRHGHMGFTPKKRS) form a disordered region.

It belongs to the universal ribosomal protein uL3 family.

It is found in the cytoplasm. Functionally, the L3 protein is a component of the large subunit of cytoplasmic ribosomes. The chain is Large ribosomal subunit protein uL3 (rpl-3) from Caenorhabditis elegans.